Reading from the N-terminus, the 265-residue chain is Apolipoprotein A-I (265 aa).

The first 18 residues, M1–A18, serve as a signal peptide directing secretion. Tandem repeats lie at residues L67–G88 and P89–N110. The interval L67–Q265 is 10 X approximate tandem repeats. M109 carries the methionine sulfoxide modification. The stretch at K111–Q121 is one 3; half-length repeat. Repeat copies occupy residues P122–V142, P144–T165, P166–A187, P188–G209, and S210–K230. The 9; half-length repeat unit spans residues P231–L241. Repeat 10 spans residues P242–Q265.

It belongs to the apolipoprotein A1/A4/E family. In terms of assembly, homodimer. Interacts with APOA1BP and CLU. Component of a sperm activating protein complex (SPAP), consisting of APOA1, an immunoglobulin heavy chain, an immunoglobulin light chain and albumin. Interacts with NDRG1. Interacts with SCGB3A2. Interacts with NAXE and YJEFN3. Glycosylated. Post-translationally, palmitoylated. In terms of processing, phosphorylation sites are present in the extracellular medium. Major protein of plasma HDL, also found in chylomicrons.

The protein localises to the secreted. In terms of biological role, participates in the reverse transport of cholesterol from tissues to the liver for excretion by promoting cholesterol efflux from tissues and by acting as a cofactor for the lecithin cholesterol acyltransferase (LCAT). As part of the SPAP complex, activates spermatozoa motility. The chain is Apolipoprotein A-I (APOA1) from Balaenoptera acutorostrata scammoni (North Pacific minke whale).